Reading from the N-terminus, the 520-residue chain is 2-isopropylmalate synthase (520 aa).

In terms of domain architecture, Pyruvate carboxyltransferase spans 12–274; that stretch reads IRIFDTTLRD…DSAINTPRIV (263 aa). Mn(2+) is bound by residues D21, H209, H211, and N245. A regulatory domain region spans residues 396–520; it reads RLASMTISDV…VVAGKTAAVA (125 aa).

This sequence belongs to the alpha-IPM synthase/homocitrate synthase family. LeuA type 1 subfamily. In terms of assembly, homodimer. Mn(2+) serves as cofactor.

Its subcellular location is the cytoplasm. The catalysed reaction is 3-methyl-2-oxobutanoate + acetyl-CoA + H2O = (2S)-2-isopropylmalate + CoA + H(+). The protein operates within amino-acid biosynthesis; L-leucine biosynthesis; L-leucine from 3-methyl-2-oxobutanoate: step 1/4. Functionally, catalyzes the condensation of the acetyl group of acetyl-CoA with 3-methyl-2-oxobutanoate (2-ketoisovalerate) to form 3-carboxy-3-hydroxy-4-methylpentanoate (2-isopropylmalate). This is 2-isopropylmalate synthase from Xanthomonas euvesicatoria pv. vesicatoria (strain 85-10) (Xanthomonas campestris pv. vesicatoria).